The primary structure comprises 240 residues: Probable septum site-determining protein MinC (240 aa).

It belongs to the MinC family. As to quaternary structure, interacts with MinD and FtsZ.

Functionally, cell division inhibitor that blocks the formation of polar Z ring septums. Rapidly oscillates between the poles of the cell to destabilize FtsZ filaments that have formed before they mature into polar Z rings. Prevents FtsZ polymerization. This is Probable septum site-determining protein MinC from Buchnera aphidicola subsp. Cinara cedri (strain Cc).